The primary structure comprises 61 residues: MARKSKIERAKYPAKFKVRVRNRCKMCGRSRGYLRDFGLCRICFRFLANSGKIPGVVKASW.

Positions 24, 27, 40, and 43 each coordinate Zn(2+).

The protein belongs to the universal ribosomal protein uS14 family. Zinc-binding uS14 subfamily. Part of the 30S ribosomal subunit. Contacts proteins S3 and S10. The cofactor is Zn(2+).

Functionally, binds 16S rRNA, required for the assembly of 30S particles and may also be responsible for determining the conformation of the 16S rRNA at the A site. In Thermodesulfovibrio yellowstonii (strain ATCC 51303 / DSM 11347 / YP87), this protein is Small ribosomal subunit protein uS14.